The primary structure comprises 451 residues: Protoheme IX farnesyltransferase, mitochondrial (451 aa).

The next 6 membrane-spanning stretches (helical) occupy residues 149–169 (TILVMLSAICSYALSPYPATV), 240–260 (PTVAALGLSNIALYSWIYTSL), 265–285 (IINTWVGALVGAIPPLMGWAA), 289–309 (LTHPGSWCLAGLLYAWQFPHF), 339–359 (VALRYSLLMFPLCFGLSYFNI), and 414–434 (KAFFASVLHLPAVLILAILHK).

Belongs to the UbiA prenyltransferase family.

The protein resides in the mitochondrion membrane. In terms of biological role, converts protoheme IX and farnesyl diphosphate to heme O. The chain is Protoheme IX farnesyltransferase, mitochondrial (COX10) from Candida glabrata (strain ATCC 2001 / BCRC 20586 / JCM 3761 / NBRC 0622 / NRRL Y-65 / CBS 138) (Yeast).